Here is a 622-residue protein sequence, read N- to C-terminus: Auxin response factor 11 (622 aa).

Residues 145 to 247 (FVKILTASDT…DLRVGVRRLA (103 aa)) constitute a DNA-binding region (TF-B3). Disordered stretches follow at residues 358 to 398 (SIQR…ISEI) and 483 to 513 (SNIS…TRSR). Composition is skewed to polar residues over residues 376–387 (SALTPTPTQQQS) and 483–511 (SNIS…TSTR). Residues 511–594 (RSRIKVQMQG…KKLFIYPSDE (84 aa)) form the PB1 domain.

This sequence belongs to the ARF family. Homodimers and heterodimers.

It localises to the nucleus. Its function is as follows. Auxin response factors (ARFs) are transcriptional factors that bind specifically to the DNA sequence 5'-TGTCTC-3' found in the auxin-responsive promoter elements (AuxREs). Could act as transcriptional activator or repressor. Formation of heterodimers with Aux/IAA proteins may alter their ability to modulate early auxin response genes expression. In Arabidopsis thaliana (Mouse-ear cress), this protein is Auxin response factor 11 (ARF11).